The chain runs to 622 residues: 3-(3-hydroxy-phenyl)propionate/3-hydroxycinnamic acid hydroxylase (622 aa).

FAD-binding positions include Asp20–Lys49 and Phe288–Asp298.

The protein belongs to the PheA/TfdB FAD monooxygenase family. The cofactor is FAD.

The enzyme catalyses 3-(3-hydroxyphenyl)propanoate + NADH + O2 + H(+) = 3-(2,3-dihydroxyphenyl)propanoate + NAD(+) + H2O. It catalyses the reaction (2E)-3-(3-hydroxyphenyl)prop-2-enoate + NADH + O2 + H(+) = (2E)-3-(2,3-dihydroxyphenyl)prop-2-enoate + NAD(+) + H2O. The protein operates within aromatic compound metabolism; 3-phenylpropanoate degradation. Its function is as follows. Catalyzes the insertion of one atom of molecular oxygen into position 2 of the phenyl ring of 3-(3-hydroxyphenyl)propionate (3-HPP) and hydroxycinnamic acid (3HCI). The protein is 3-(3-hydroxy-phenyl)propionate/3-hydroxycinnamic acid hydroxylase of Paraburkholderia xenovorans (strain LB400).